Consider the following 342-residue polypeptide: GTPase Obg (342 aa).

Residues 1–159 (MQFIDRAEIE…RHLRLELKLL (159 aa)) enclose the Obg domain. Residues 160-328 (AEVGIIGLPN…LLAKVWQQLE (169 aa)) enclose the OBG-type G domain. GTP-binding positions include 166 to 173 (GLPNAGKS), 191 to 195 (FTTLI), 213 to 216 (DIPG), 280 to 283 (NKID), and 309 to 311 (SAV). Ser-173 and Thr-193 together coordinate Mg(2+).

The protein belongs to the TRAFAC class OBG-HflX-like GTPase superfamily. OBG GTPase family. In terms of assembly, monomer. Mg(2+) serves as cofactor.

It is found in the cytoplasm. In terms of biological role, an essential GTPase which binds GTP, GDP and possibly (p)ppGpp with moderate affinity, with high nucleotide exchange rates and a fairly low GTP hydrolysis rate. Plays a role in control of the cell cycle, stress response, ribosome biogenesis and in those bacteria that undergo differentiation, in morphogenesis control. The polypeptide is GTPase Obg (Microcystis aeruginosa (strain NIES-843 / IAM M-2473)).